An 811-amino-acid chain; its full sequence is Zinc finger protein 839 (811 aa).

The C2H2-type zinc-finger motif lies at 197–222 (FKCQTCEKSYIGKGGLARHFKLNPGH). Disordered stretches follow at residues 329–349 (QRRA…RASP), 455–555 (PDNL…NGSV), and 612–654 (ALEH…AEAG). The span at 476–485 (SSEKREREAA) shows a compositional bias: basic and acidic residues. Residues 501–510 (SNDTTESLAA) show a composition bias toward polar residues.

The sequence is that of Zinc finger protein 839 (ZNF839) from Homo sapiens (Human).